A 471-amino-acid polypeptide reads, in one-letter code: Ankyrin repeat and death domain-containing protein 1A (471 aa).

10 ANK repeats span residues Val19–Glu48, Phe52–Cys81, Asp85–Leu114, Leu120–Val149, Glu153–Glu182, Glu186–Ala215, Lys219–Val248, His251–Ala280, Arg284–Leu313, and Gln317–Trp346. The 89-residue stretch at Ser379–Val467 folds into the Death domain.

The protein is Ankyrin repeat and death domain-containing protein 1A (ANKDD1A) of Macaca fascicularis (Crab-eating macaque).